Consider the following 126-residue polypeptide: RuBisCO chaperone RbcX (126 aa).

It belongs to the RbcX family. In terms of assembly, homodimer. Interacts with the exposed C-terminal peptide of RbcL via its central cleft, contacts a second RbcL monomer via its peripheral polar surface.

It is found in the carboxysome. Its subcellular location is the cytoplasm. An RbcL-specific chaperone. Required for assembly of the RbcL8 core. The central cleft of the RbcX homodimer (RbcX2) binds the C-terminus of a RbcL monomer, stabilizing the C-terminus and probably preventing its reassociation with chaperonin GroEL-ES. At the same time the peripheral region of RbcX2 binds a second RbcL monomer, bridging the RbcL homodimers in the correct orientation. The RbcX2(2)-bound RbcL dimers then assemble into the RbcL8 core (RbcL8-(RbcX2)8). RbcS binding triggers the release of RbcX2. This is RuBisCO chaperone RbcX from Thermosynechococcus vestitus (strain NIES-2133 / IAM M-273 / BP-1).